The sequence spans 317 residues: Methionyl-tRNA formyltransferase (317 aa).

112–115 is a (6S)-5,6,7,8-tetrahydrofolate binding site; the sequence is SLLP.

Belongs to the Fmt family.

It carries out the reaction L-methionyl-tRNA(fMet) + (6R)-10-formyltetrahydrofolate = N-formyl-L-methionyl-tRNA(fMet) + (6S)-5,6,7,8-tetrahydrofolate + H(+). Its function is as follows. Attaches a formyl group to the free amino group of methionyl-tRNA(fMet). The formyl group appears to play a dual role in the initiator identity of N-formylmethionyl-tRNA by promoting its recognition by IF2 and preventing the misappropriation of this tRNA by the elongation apparatus. The sequence is that of Methionyl-tRNA formyltransferase from Mycoplasma capricolum subsp. capricolum (strain California kid / ATCC 27343 / NCTC 10154).